A 1213-amino-acid polypeptide reads, in one-letter code: Chitin synthase 3 (1213 aa).

Residues 1 to 97 are disordered; sequence MSNFRDSSSP…TPPHQEEEED (97 aa). Residues 1-168 are Cytoplasmic-facing; it reads MSNFRDSSSP…KPKHDIYFWK (168 aa). Residues 32-44 are compositionally biased toward basic and acidic residues; the sequence is IRPERSRMDESHP. The segment covering 75-87 has biased composition (polar residues); it reads ELSTSRSHLSNYA. Residues 169–189 traverse the membrane as a helical segment; the sequence is VYCYAITFWAPAPLLKLFGLP. Residues 190-200 lie on the Extracellular side of the membrane; that stretch reads TKDRQFAWREK. The chain crosses the membrane as a helical span at residues 201–221; it reads IGLISCILYVGAFVAYLTFGF. Residues 222–450 lie on the Cytoplasmic side of the membrane; it reads TKTVCSSQVV…TDTIGCIASK (229 aa). The helical transmembrane segment at 451-471 threads the bilayer; the sequence is VVLYMSLVFILSVVVVKFIMA. Topologically, residues 472-1016 are extracellular; the sequence is CWFKWVTSRK…INSTVHNLFE (545 aa). Asparagine 588 and asparagine 1008 each carry an N-linked (GlcNAc...) asparagine glycan. Residues 1017–1037 traverse the membrane as a helical segment; that stretch reads LVLVKDLCGTFCFSMQFVIFI. Residues 1038-1039 are Cytoplasmic-facing; it reads EL. Residues 1040-1060 form a helical membrane-spanning segment; the sequence is IGTLVLPAAITFTIYVIIVAI. At 1061-1065 the chain is on the extracellular side; sequence VSKPT. The helical transmembrane segment at 1066–1086 threads the bilayer; sequence PVMSLVLLAVIFGLPGCLIVI. The Cytoplasmic portion of the chain corresponds to 1087 to 1213; sequence TVSSLSYLVY…LSQGSSSGSS (127 aa). Positions 1161–1213 are disordered; sequence ERRSTENRKQQQQQQLTNNSSNNLAVPGAAWDPSNTGGNLIDDLSQGSSSGSS.

It belongs to the chitin synthase family. Class IV subfamily.

Its subcellular location is the cell membrane. It catalyses the reaction [(1-&gt;4)-N-acetyl-beta-D-glucosaminyl](n) + UDP-N-acetyl-alpha-D-glucosamine = [(1-&gt;4)-N-acetyl-beta-D-glucosaminyl](n+1) + UDP + H(+). In terms of biological role, polymerizes chitin, a structural polymer of the cell wall and septum, by transferring the sugar moiety of UDP-GlcNAc to the non-reducing end of the growing chitin polymer. The sequence is that of Chitin synthase 3 (CHS3) from Candida albicans (Yeast).